The primary structure comprises 44 residues: Thaumatin-like protein 5 (44 aa).

The protein belongs to the thaumatin family.

In Glebionis coronaria (Crown daisy), this protein is Thaumatin-like protein 5.